The primary structure comprises 352 residues: MDYQVSSPIYDIDYGASEPCRKTDVKQMGAHLLPPLYSMVFLFGFVGNMLVVLILVNCKRPKSMTDIYLLNLAISDLLFLFTVPFWAHYAAGQWDFGNTMCQFLTGLYFIGFFSGIFFIILLTIDRYLAIVHAVFALKARTVTFGVMTSVITWVVAVFASLPGIIFTRSQKEGYHYTCSPHFPFGQYQFWKNFETLKMVILGLVLPLLVMVICYSGILKTLLRCRNEKKRHRAVRLIFTIMIVYFLFWAPYNIVLLLNTYQEFFGLNNCSSSNRLDQAMQVTETLGMTHCCVNPIIYAFVGEKFRNYLLVFFQKHIAKCFCECCSIFQKEAPERANSVYTRSTGEQEISVGL.

Residues 1 to 30 (MDYQVSSPIYDIDYGASEPCRKTDVKQMGA) are Extracellular-facing. Tyrosine 3 bears the Sulfotyrosine mark. O-linked (GalNAc...) serine glycans are attached at residues serine 6 and serine 7. Sulfotyrosine occurs at positions 10 and 14. 2 disulfide bridges follow: cysteine 20–cysteine 269 and cysteine 101–cysteine 178. A helical transmembrane segment spans residues 31-58 (HLLPPLYSMVFLFGFVGNMLVVLILVNC). The Cytoplasmic portion of the chain corresponds to 59 to 68 (KRPKSMTDIY). A helical membrane pass occupies residues 69–89 (LLNLAISDLLFLFTVPFWAHY). Residues 90-102 (AAGQWDFGNTMCQ) lie on the Extracellular side of the membrane. Residues 103-124 (FLTGLYFIGFFSGIFFIILLTI) form a helical membrane-spanning segment. The Cytoplasmic segment spans residues 125 to 141 (DRYLAIVHAVFALKART). The helical transmembrane segment at 142–166 (VTFGVMTSVITWVVAVFASLPGIIF) threads the bilayer. At 167–198 (TRSQKEGYHYTCSPHFPFGQYQFWKNFETLKM) the chain is on the extracellular side. A helical transmembrane segment spans residues 199 to 218 (VILGLVLPLLVMVICYSGIL). Residues 219 to 235 (KTLLRCRNEKKRHRAVR) lie on the Cytoplasmic side of the membrane. A helical transmembrane segment spans residues 236-260 (LIFTIMIVYFLFWAPYNIVLLLNTY). Residues 261–277 (QEFFGLNNCSSSNRLDQ) lie on the Extracellular side of the membrane. Residues 278–301 (AMQVTETLGMTHCCVNPIIYAFVG) form a helical membrane-spanning segment. At 302–352 (EKFRNYLLVFFQKHIAKCFCECCSIFQKEAPERANSVYTRSTGEQEISVGL) the chain is on the cytoplasmic side. S-palmitoyl cysteine attachment occurs at residues cysteine 321, cysteine 323, and cysteine 324. Phosphoserine; by BARK1 is present on residues serine 337, serine 342, and serine 349.

This sequence belongs to the G-protein coupled receptor 1 family. In terms of assembly, interacts with PRAF2. Efficient ligand binding to CCL3/MIP-1alpha and CCL4/MIP-1beta requires sulfation, O-glycosylation and sialic acid modifications. Glycosylation on Ser-6 is required for efficient binding of CCL4. Interacts with GRK2. Interacts with ARRB1 and ARRB2. Interacts with CNIH4. Interacts with S100A4; this interaction stimulates T-lymphocyte chemotaxis. In terms of processing, sulfated on at least 2 of the N-terminal tyrosines. Sulfation is required for efficient binding of the chemokines, CCL3 and CCL4. Post-translationally, palmitoylation in the C-terminal is important for cell surface expression. Phosphorylation on serine residues in the C-terminal is stimulated by binding CC chemokines especially by APO-RANTES. In terms of processing, O-glycosylated, but not N-glycosylated. Ser-6 appears to be the major site even if Ser-7 may be also O-glycosylated. Also sialylated glycans present which contribute to chemokine binding. Ser-17 may also be glycosylated and, if so, with small moieties such as a T-antigen.

The protein localises to the cell membrane. Functionally, receptor for a number of inflammatory CC-chemokines including CCL3/MIP-1-alpha, CCL4/MIP-1-beta and RANTES and subsequently transduces a signal by increasing the intracellular calcium ion level. May play a role in the control of granulocytic lineage proliferation or differentiation. Participates in T-lymphocyte migration to the infection site by acting as a chemotactic receptor. The polypeptide is C-C chemokine receptor type 5 (CCR5) (Ateles geoffroyi (Black-handed spider monkey)).